A 145-amino-acid polypeptide reads, in one-letter code: MDESKKNERLQQLTDIQYNVTQKAGTERPFQNEFYDNEAKGIYVDIVSGKPLFSSNDQYDAGCGWPSFTKPIDEAEVIEHRDLTHGMIRTEVKSADADSHLGHVFPDGPQDKGGLRYCINSAALRFIPVDKLEEEGYQAYKKIFE.

Residues 6-129 form the MsrB domain; that stretch reads KNERLQQLTD…NSAALRFIPV (124 aa). Cys-118 acts as the Nucleophile in catalysis.

Belongs to the MsrB Met sulfoxide reductase family.

It catalyses the reaction L-methionyl-[protein] + [thioredoxin]-disulfide + H2O = L-methionyl-(R)-S-oxide-[protein] + [thioredoxin]-dithiol. This chain is Peptide methionine sulfoxide reductase MsrB, found in Listeria monocytogenes serotype 4b (strain CLIP80459).